We begin with the raw amino-acid sequence, 638 residues long: Chaperone protein DnaK (638 aa).

T199 is subject to Phosphothreonine; by autocatalysis. The span at 603–618 shows a compositional bias: low complexity; sequence YAQPGAEAGAEQQGSA. Residues 603 to 638 form a disordered region; sequence YAQPGAEAGAEQQGSANNADDDIVDAEFEEVNDDKK. Residues 621-638 are compositionally biased toward acidic residues; the sequence is ADDDIVDAEFEEVNDDKK.

It belongs to the heat shock protein 70 family.

Functionally, acts as a chaperone. This chain is Chaperone protein DnaK, found in Hydrogenovibrio crunogenus (strain DSM 25203 / XCL-2) (Thiomicrospira crunogena).